We begin with the raw amino-acid sequence, 475 residues long: Ribulose bisphosphate carboxylase large chain (475 aa).

Residues 1–2 (MS) constitute a propeptide that is removed on maturation. P3 is modified (N-acetylproline). An N6,N6,N6-trimethyllysine modification is found at K14. Positions 123 and 173 each coordinate substrate. Residue K175 is the Proton acceptor of the active site. K177 is a binding site for substrate. Mg(2+)-binding residues include K201, D203, and E204. N6-carboxylysine is present on K201. Catalysis depends on H294, which acts as the Proton acceptor. Residues R295, H327, and S379 each contribute to the substrate site.

Belongs to the RuBisCO large chain family. Type I subfamily. As to quaternary structure, heterohexadecamer of 8 large chains and 8 small chains; disulfide-linked. The disulfide link is formed within the large subunit homodimers. The cofactor is Mg(2+). In terms of processing, the disulfide bond which can form in the large chain dimeric partners within the hexadecamer appears to be associated with oxidative stress and protein turnover.

It localises to the plastid. The protein resides in the chloroplast. It carries out the reaction 2 (2R)-3-phosphoglycerate + 2 H(+) = D-ribulose 1,5-bisphosphate + CO2 + H2O. The catalysed reaction is D-ribulose 1,5-bisphosphate + O2 = 2-phosphoglycolate + (2R)-3-phosphoglycerate + 2 H(+). RuBisCO catalyzes two reactions: the carboxylation of D-ribulose 1,5-bisphosphate, the primary event in carbon dioxide fixation, as well as the oxidative fragmentation of the pentose substrate in the photorespiration process. Both reactions occur simultaneously and in competition at the same active site. The protein is Ribulose bisphosphate carboxylase large chain of Chlorokybus atmophyticus (Soil alga).